The following is a 200-amino-acid chain: Thymidine kinase (200 aa).

ATP contacts are provided by residues 9–16 and 88–91; these read STMNAGKS and DEAH. The Proton acceptor role is filled by E89. C146, C148, C183, and H186 together coordinate Zn(2+).

Belongs to the thymidine kinase family. In terms of assembly, homotetramer.

The protein localises to the cytoplasm. The catalysed reaction is thymidine + ATP = dTMP + ADP + H(+). The chain is Thymidine kinase from Rhizobium etli (strain ATCC 51251 / DSM 11541 / JCM 21823 / NBRC 15573 / CFN 42).